Here is a 260-residue protein sequence, read N- to C-terminus: Acetylglutamate kinase (260 aa).

Substrate is bound by residues 46-47 (GG), Arg68, and Asn160.

Belongs to the acetylglutamate kinase family. ArgB subfamily.

It is found in the cytoplasm. The catalysed reaction is N-acetyl-L-glutamate + ATP = N-acetyl-L-glutamyl 5-phosphate + ADP. It participates in amino-acid biosynthesis; L-arginine biosynthesis; N(2)-acetyl-L-ornithine from L-glutamate: step 2/4. Catalyzes the ATP-dependent phosphorylation of N-acetyl-L-glutamate. This is Acetylglutamate kinase from Shewanella putrefaciens (strain CN-32 / ATCC BAA-453).